A 170-amino-acid polypeptide reads, in one-letter code: Disulfide bond formation protein B (170 aa).

At 1–14 (MNDSTLALRRERRL) the chain is on the cytoplasmic side. Residues 15–31 (LMLLGWVCIALLAGALY) form a helical membrane-spanning segment. The Periplasmic portion of the chain corresponds to 32–49 (LQYVKNEDPCPLCIIQRY). Cysteines 41 and 44 form a disulfide. Residues 50-64 (FFAAIGIFAFLAAGI) traverse the membrane as a helical segment. The Cytoplasmic segment spans residues 65–71 (RNWRVIW). Residues 72-89 (VFELLIAIAAAGGVGTAA) traverse the membrane as a helical segment. Topologically, residues 90 to 144 (RHLSIQMNPGFSCGFDTLQPIVDSLPPAQWFPGMFKVAGLCETVYPPIFGILLPG) are periplasmic. Residues Cys-102 and Cys-130 are joined by a disulfide bond. The helical transmembrane segment at 145–163 (WALIGFAVILVAVASSLWR) threads the bilayer. At 164–170 (HRRKLAG) the chain is on the cytoplasmic side.

The protein belongs to the DsbB family.

The protein resides in the cell inner membrane. Required for disulfide bond formation in some periplasmic proteins. Acts by oxidizing the DsbA protein. The polypeptide is Disulfide bond formation protein B (Burkholderia ambifaria (strain ATCC BAA-244 / DSM 16087 / CCUG 44356 / LMG 19182 / AMMD) (Burkholderia cepacia (strain AMMD))).